A 220-amino-acid polypeptide reads, in one-letter code: IQ domain-containing protein F3 (220 aa).

A compositionally biased stretch (basic and acidic residues) spans 1 to 22 (MELDQDQKVETPEAAENGKDEM). The disordered stretch occupies residues 1-81 (MELDQDQKVE…KQIQDEKTGI (81 aa)). Residues 23 to 50 (QLEEQTQDEDTTETETETETETEAEAEG) are compositionally biased toward acidic residues. The stretch at 69–93 (QAEKQIQDEKTGIKEADRAIQEQTQ) forms a coiled coil. Residues 146–175 (AELAGVKIQAWWRGTLVRRTLLLAILSAWT) form the IQ domain.

The protein is IQ domain-containing protein F3 (Iqcf3) of Rattus norvegicus (Rat).